A 494-amino-acid polypeptide reads, in one-letter code: MNAPVKPSQLIKGATGDWEVVIGLEIHAQVSSNAKLFSGAATAFGGDPNSHVSLVDAAMPGMLPVINEECVKQAIRSGLGLNAQINLRSVFDRKNYFYPDLPQGYQISQYKSPIVGEGIVVVDLPNGDSITVGIERLHLEQDAGKLLHDQHPTMTFVDLNRSGVALMEIVSKPDLRSSEQAKAYVSKLRTILRYLGTCDGDMEKGSLRADVNVSVRKPGEPYGTRCEIKNVNSIRFIGQAIEYEARRQIGILEDGGSIDQETRLYDPDKAETRSMRSKEEAHDYRYFPDPDLLPLEFSQAYVDELKTGLPELPDQKKSRFIGTFGLSSDDAGVLVSERESADFYEAVLAKLSDAARDGKLAANWVINELFGRLNKDGQNIDTSPVSAAQLAAIVDLIGEGTISGKIAKELFEIVWREGGDPRELVEARGMKQVTDLTAIEKVVDDIVASNPDKVAQAIAKPAMLGWFVGQVMKSSGGKANPQAVNDLLKRKLGL.

This sequence belongs to the GatB/GatE family. GatB subfamily. As to quaternary structure, heterotrimer of A, B and C subunits.

It catalyses the reaction L-glutamyl-tRNA(Gln) + L-glutamine + ATP + H2O = L-glutaminyl-tRNA(Gln) + L-glutamate + ADP + phosphate + H(+). The catalysed reaction is L-aspartyl-tRNA(Asn) + L-glutamine + ATP + H2O = L-asparaginyl-tRNA(Asn) + L-glutamate + ADP + phosphate + 2 H(+). Its function is as follows. Allows the formation of correctly charged Asn-tRNA(Asn) or Gln-tRNA(Gln) through the transamidation of misacylated Asp-tRNA(Asn) or Glu-tRNA(Gln) in organisms which lack either or both of asparaginyl-tRNA or glutaminyl-tRNA synthetases. The reaction takes place in the presence of glutamine and ATP through an activated phospho-Asp-tRNA(Asn) or phospho-Glu-tRNA(Gln). The sequence is that of Aspartyl/glutamyl-tRNA(Asn/Gln) amidotransferase subunit B from Rhodopseudomonas palustris (strain BisB5).